Reading from the N-terminus, the 297-residue chain is Nucleotide-binding protein CJA_2809 (297 aa).

8-15 (GLSGSGKT) is an ATP binding site. A GTP-binding site is contributed by 59-62 (DVRN).

The protein belongs to the RapZ-like family.

In terms of biological role, displays ATPase and GTPase activities. The polypeptide is Nucleotide-binding protein CJA_2809 (Cellvibrio japonicus (strain Ueda107) (Pseudomonas fluorescens subsp. cellulosa)).